Reading from the N-terminus, the 442-residue chain is 3-phosphoshikimate 1-carboxyvinyltransferase (442 aa).

Residues K25, S26, and R30 each coordinate 3-phosphoshikimate. A phosphoenolpyruvate-binding site is contributed by K25. Residues G96 and R124 each coordinate phosphoenolpyruvate. Residues S171, S172, Q173, S203, D325, and K352 each contribute to the 3-phosphoshikimate site. Residue Q173 coordinates phosphoenolpyruvate. Residue D325 is the Proton acceptor of the active site. R356, R400, and K425 together coordinate phosphoenolpyruvate.

The protein belongs to the EPSP synthase family. In terms of assembly, monomer.

Its subcellular location is the cytoplasm. The catalysed reaction is 3-phosphoshikimate + phosphoenolpyruvate = 5-O-(1-carboxyvinyl)-3-phosphoshikimate + phosphate. It participates in metabolic intermediate biosynthesis; chorismate biosynthesis; chorismate from D-erythrose 4-phosphate and phosphoenolpyruvate: step 6/7. In terms of biological role, catalyzes the transfer of the enolpyruvyl moiety of phosphoenolpyruvate (PEP) to the 5-hydroxyl of shikimate-3-phosphate (S3P) to produce enolpyruvyl shikimate-3-phosphate and inorganic phosphate. The sequence is that of 3-phosphoshikimate 1-carboxyvinyltransferase from Bordetella pertussis (strain Tohama I / ATCC BAA-589 / NCTC 13251).